The sequence spans 100 residues: Urease subunit gamma (100 aa).

It belongs to the urease gamma subunit family. As to quaternary structure, heterotrimer of UreA (gamma), UreB (beta) and UreC (alpha) subunits. Three heterotrimers associate to form the active enzyme.

The protein localises to the cytoplasm. The enzyme catalyses urea + 2 H2O + H(+) = hydrogencarbonate + 2 NH4(+). It participates in nitrogen metabolism; urea degradation; CO(2) and NH(3) from urea (urease route): step 1/1. This chain is Urease subunit gamma, found in Pseudomonas syringae pv. syringae (strain B728a).